A 722-amino-acid polypeptide reads, in one-letter code: Bifunctional UDP-N-acetylglucosamine 2-epimerase/N-acetylmannosamine kinase (722 aa).

5 residues coordinate UDP: arginine 19, serine 23, arginine 113, histidine 220, and asparagine 253. Lysine 259, glutamate 271, lysine 280, and histidine 281 together coordinate CMP-N-acetyl-beta-neuraminate. Residues valine 282, serine 301, serine 302, glutamate 307, and arginine 321 each coordinate UDP. Residues 406–722 (TLSALAVDLG…VLDYTTRRIY (317 aa)) form an N-acetylmannosamine kinase region. A Mg(2+)-binding site is contributed by aspartate 413. An N-acyl-D-mannosamine 6-phosphate is bound at residue glycine 416. Residues threonine 417, asparagine 418, and arginine 420 each coordinate ADP. 6 residues coordinate an N-acyl-D-mannosamine 6-phosphate: glycine 476, arginine 477, threonine 489, asparagine 516, aspartate 517, and glycine 545. Glycine 476, arginine 477, threonine 489, asparagine 516, and aspartate 517 together coordinate an N-acyl-D-mannosamine. Aspartate 517 is a catalytic residue. Residues glutamate 566 and histidine 569 each contribute to the an N-acyl-D-mannosamine site. Histidine 569 contacts an N-acyl-D-mannosamine 6-phosphate. The Zn(2+) site is built by histidine 569, cysteine 579, cysteine 581, and cysteine 586. Glutamate 588 contributes to the an N-acyl-D-mannosamine 6-phosphate binding site. An N-acyl-D-mannosamine is bound at residue glutamate 588.

It in the N-terminal section; belongs to the UDP-N-acetylglucosamine 2-epimerase family. This sequence in the C-terminal section; belongs to the ROK (NagC/XylR) family. In terms of assembly, homodimer. Homotetramer. Homohexamer. The hexameric form exhibits both enzyme activities, whereas the dimeric form only catalyzes the phosphorylation of N-acyl-D-mannosamine. Phosphorylated. Phosphorylation by PKC activates the UDP-N-acetylglucosamine 2-epimerase activity. In terms of tissue distribution, highest expression in liver and placenta. Also found in heart, brain, lung, kidney, skeletal muscle and pancreas. Isoform 1 is expressed in heart, brain, kidney, liver, placenta, lung, spleen, pancreas, skeletal muscle and colon. Isoform 2 is expressed mainly in placenta, but also in brain, kidney, liver, lung, pancreas and colon. Isoform 3 is expressed at low level in kidney, liver, placenta and colon.

The protein resides in the cytoplasm. The protein localises to the cytosol. It carries out the reaction UDP-N-acetyl-alpha-D-glucosamine + H2O = aldehydo-N-acetyl-D-mannosamine + UDP + H(+). The enzyme catalyses an N-acyl-D-mannosamine + ATP = an N-acyl-D-mannosamine 6-phosphate + ADP + H(+). It functions in the pathway amino-sugar metabolism; N-acetylneuraminate biosynthesis. Its activity is regulated as follows. The UDP-N-acetylglucosamine 2-epimerase activity, in contrast to the N-acetylmannosamine kinase activity, exhibits allosteric regulation by cytidine monophosphate-N-acetylneuraminic acid (CMP-Neu5Ac), the end product of neuraminic acid biosynthesis. Moreover, the activity is contingent upon the oligomeric state of the enzyme. The monomeric form is inactive, while the dimeric form selectively catalyzes the phosphorylation of N-acetylmannosamine. The hexameric form, on the other hand, demonstrates full proficiency in both enzyme activities. Furthermore, the UDP-N-acetylglucosamine 2-epimerase activity is increased by PKC-mediated phosphorylation. Functionally, bifunctional enzyme that possesses both UDP-N-acetylglucosamine 2-epimerase and N-acetylmannosamine kinase activities, and serves as the initiator of the biosynthetic pathway leading to the production of N-acetylneuraminic acid (NeuAc), a critical precursor in the synthesis of sialic acids. By catalyzing this pivotal and rate-limiting step in sialic acid biosynthesis, this enzyme assumes a pivotal role in governing the regulation of cell surface sialylation, playing a role in embryonic angiogenesis. Sialic acids represent a category of negatively charged sugars that reside on the surface of cells as terminal components of glycoconjugates and mediate important functions in various cellular processes, including cell adhesion, signal transduction, and cellular recognition. This is Bifunctional UDP-N-acetylglucosamine 2-epimerase/N-acetylmannosamine kinase from Homo sapiens (Human).